A 436-amino-acid chain; its full sequence is Ribosomal protein uS12 methylthiotransferase RimO (436 aa).

The region spanning 4-122 (KRIDIITLGC…LLQDLGKTYH (119 aa)) is the MTTase N-terminal domain. 6 residues coordinate [4Fe-4S] cluster: Cys-13, Cys-51, Cys-85, Cys-146, Cys-150, and Cys-153. One can recognise a Radical SAM core domain in the interval 132 to 363 (TTPKHYAYLK…MDIQQGISAE (232 aa)). One can recognise a TRAM domain in the interval 366–433 (AAKIGQQMKV…DFDLYAKILN (68 aa)).

The protein belongs to the methylthiotransferase family. RimO subfamily. It depends on [4Fe-4S] cluster as a cofactor.

It is found in the cytoplasm. The enzyme catalyses L-aspartate(89)-[ribosomal protein uS12]-hydrogen + (sulfur carrier)-SH + AH2 + 2 S-adenosyl-L-methionine = 3-methylsulfanyl-L-aspartate(89)-[ribosomal protein uS12]-hydrogen + (sulfur carrier)-H + 5'-deoxyadenosine + L-methionine + A + S-adenosyl-L-homocysteine + 2 H(+). Catalyzes the methylthiolation of an aspartic acid residue of ribosomal protein uS12. This chain is Ribosomal protein uS12 methylthiotransferase RimO, found in Bacteroides thetaiotaomicron (strain ATCC 29148 / DSM 2079 / JCM 5827 / CCUG 10774 / NCTC 10582 / VPI-5482 / E50).